We begin with the raw amino-acid sequence, 637 residues long: Neurexin-3-beta (637 aa).

A signal peptide spans 1 to 35; it reads MHLRIHARRSPPRRPAWTLGIWFLFWGCIVSSVWS. The Extracellular segment spans residues 36–562; it reads SSNVASSSST…EVIRESSSTT (527 aa). The span at 43-52 shows a compositional bias: low complexity; sequence SSTSSSPGSH. The tract at residues 43 to 65 is disordered; sequence SSTSSSPGSHSQHEHHFHGSKHH. The span at 55-65 shows a compositional bias: basic residues; the sequence is HEHHFHGSKHH. The 171-residue stretch at 85 to 255 folds into the Laminin G-like domain; sequence ATYIFGKSGG…NPNIKINGSV (171 aa). Aspartate 137 and isoleucine 154 together coordinate Ca(2+). The N-linked (GlcNAc...) asparagine glycan is linked to asparagine 184. Ca(2+) is bound by residues isoleucine 206 and asparagine 208. Residues asparagine 252 and asparagine 296 are each glycosylated (N-linked (GlcNAc...) asparagine). Positions 289–310 are disordered; that stretch reads ATTTTRKNRSTASIQPTSDDLV. Residues 298-310 show a composition bias toward polar residues; that stretch reads STASIQPTSDDLV. Residue serine 312 is glycosylated (O-linked (Xyl...) (heparan sulfate) serine). A helical transmembrane segment spans residues 563-583; it reads GMVVGIVAAAALCILILLYAM. The Cytoplasmic segment spans residues 584–637; it reads YKYRNRDEGSYQVDETRNYISNSAQSNGTLMKEKQQSSKSGHKKQKNKDREYYV. Positions 605 to 637 are disordered; that stretch reads NSAQSNGTLMKEKQQSSKSGHKKQKNKDREYYV.

It belongs to the neurexin family. As to quaternary structure, weakly interacts with CBLN1 and CBLN2. Very weak binding, if any, to CBLN4. Specific isoforms bind neuroligins NLGN1, NLGN2 and NLGN3. Interacts with CLSTN3. Post-translationally, processed by alpha-secretase leading to the formation of an extracellular soluble protein as well as a C-terminal membrane-embedded fragment (CTF). Proteolysis of these CTFs by gamma-secretase releases intracellular domains (ICDs) and extracellular peptides. O-glycosylated; contains heparan sulfate. Heparan sulfate attachment is required for synapse development by mediating interactions with neuroligins. In terms of tissue distribution, expressed in the blood vessel walls (at protein level).

Its subcellular location is the presynaptic cell membrane. Its function is as follows. Neuronal cell surface protein that may be involved in cell recognition and cell adhesion. May mediate intracellular signaling. Functions as part of a trans-synaptic complex by binding to cerebellins and postsynaptic GRID1. This interaction helps regulate the activity of NMDA and AMPA receptors at hippocampal synapses without affecting synapse formation. NRXN3B-CBLN2-GRID1 complex transduce presynaptic signals into postsynaptic AMPAR response. In Homo sapiens (Human), this protein is Neurexin-3-beta.